A 392-amino-acid chain; its full sequence is 1-deoxy-D-xylulose 5-phosphate reductoisomerase (392 aa).

Residues Thr-10, Gly-11, Ser-12, Ile-13, Arg-37, Gln-38, and Asn-124 each contribute to the NADPH site. Lys-125 contributes to the 1-deoxy-D-xylulose 5-phosphate binding site. An NADPH-binding site is contributed by Glu-126. A Mn(2+)-binding site is contributed by Asp-150. 4 residues coordinate 1-deoxy-D-xylulose 5-phosphate: Ser-151, Glu-152, Ser-179, and His-202. Position 152 (Glu-152) interacts with Mn(2+). Position 208 (Gly-208) interacts with NADPH. Positions 215, 220, 221, and 224 each coordinate 1-deoxy-D-xylulose 5-phosphate. Residue Glu-224 participates in Mn(2+) binding.

The protein belongs to the DXR family. Mg(2+) serves as cofactor. It depends on Mn(2+) as a cofactor.

It carries out the reaction 2-C-methyl-D-erythritol 4-phosphate + NADP(+) = 1-deoxy-D-xylulose 5-phosphate + NADPH + H(+). It participates in isoprenoid biosynthesis; isopentenyl diphosphate biosynthesis via DXP pathway; isopentenyl diphosphate from 1-deoxy-D-xylulose 5-phosphate: step 1/6. Catalyzes the NADPH-dependent rearrangement and reduction of 1-deoxy-D-xylulose-5-phosphate (DXP) to 2-C-methyl-D-erythritol 4-phosphate (MEP). The sequence is that of 1-deoxy-D-xylulose 5-phosphate reductoisomerase from Cupriavidus metallidurans (strain ATCC 43123 / DSM 2839 / NBRC 102507 / CH34) (Ralstonia metallidurans).